Here is a 427-residue protein sequence, read N- to C-terminus: Serine--tRNA ligase (427 aa).

235 to 237 provides a ligand contact to L-serine; that stretch reads TAE. ATP contacts are provided by residues 266 to 268 and V282; that span reads RRE. An L-serine-binding site is contributed by E289. 353–356 contacts ATP; sequence EASS. S389 provides a ligand contact to L-serine.

It belongs to the class-II aminoacyl-tRNA synthetase family. Type-1 seryl-tRNA synthetase subfamily. Homodimer. The tRNA molecule binds across the dimer.

The protein resides in the cytoplasm. It catalyses the reaction tRNA(Ser) + L-serine + ATP = L-seryl-tRNA(Ser) + AMP + diphosphate + H(+). The catalysed reaction is tRNA(Sec) + L-serine + ATP = L-seryl-tRNA(Sec) + AMP + diphosphate + H(+). The protein operates within aminoacyl-tRNA biosynthesis; selenocysteinyl-tRNA(Sec) biosynthesis; L-seryl-tRNA(Sec) from L-serine and tRNA(Sec): step 1/1. In terms of biological role, catalyzes the attachment of serine to tRNA(Ser). Is also able to aminoacylate tRNA(Sec) with serine, to form the misacylated tRNA L-seryl-tRNA(Sec), which will be further converted into selenocysteinyl-tRNA(Sec). This Chloroherpeton thalassium (strain ATCC 35110 / GB-78) protein is Serine--tRNA ligase.